A 346-amino-acid polypeptide reads, in one-letter code: Ketol-acid reductoisomerase (NADP(+)) (346 aa).

The KARI N-terminal Rossmann domain maps to Lys-1–Ser-141. Residues Ser-11 and Asp-41–Gln-43 contribute to the NADP(+) site. Residue His-65 is part of the active site. Position 91 (Gly-91) interacts with NADP(+). KARI C-terminal knotted domains follow at residues Ser-142–Glu-286 and Tyr-287–Ile-346. Residues Asp-150, Glu-154, Glu-322, and Glu-326 each contribute to the Mg(2+) site.

The protein belongs to the ketol-acid reductoisomerase family. Requires Mg(2+) as cofactor.

It carries out the reaction (2R)-2,3-dihydroxy-3-methylbutanoate + NADP(+) = (2S)-2-acetolactate + NADPH + H(+). It catalyses the reaction (2R,3R)-2,3-dihydroxy-3-methylpentanoate + NADP(+) = (S)-2-ethyl-2-hydroxy-3-oxobutanoate + NADPH + H(+). The protein operates within amino-acid biosynthesis; L-isoleucine biosynthesis; L-isoleucine from 2-oxobutanoate: step 2/4. It participates in amino-acid biosynthesis; L-valine biosynthesis; L-valine from pyruvate: step 2/4. Involved in the biosynthesis of branched-chain amino acids (BCAA). Catalyzes an alkyl-migration followed by a ketol-acid reduction of (S)-2-acetolactate (S2AL) to yield (R)-2,3-dihydroxy-isovalerate. In the isomerase reaction, S2AL is rearranged via a Mg-dependent methyl migration to produce 3-hydroxy-3-methyl-2-ketobutyrate (HMKB). In the reductase reaction, this 2-ketoacid undergoes a metal-dependent reduction by NADPH to yield (R)-2,3-dihydroxy-isovalerate. In Buchnera aphidicola subsp. Uroleucon rurale, this protein is Ketol-acid reductoisomerase (NADP(+)) (ilvC).